Reading from the N-terminus, the 107-residue chain is Acidic phospholipase A2 braziliase-I (107 aa).

Intrachain disulfides connect Cys26/Cys100, Cys28/Cys44, Cys43/Cys86, Cys49/Cys107, Cys50/Cys79, Cys57/Cys72, and Cys66/Cys77. Residues Tyr27, Gly29, and Gly31 each coordinate Ca(2+). His47 is an active-site residue. Asp48 serves as a coordination point for Ca(2+). Asp80 is a catalytic residue.

As to quaternary structure, monomer. Ca(2+) is required as a cofactor. In terms of tissue distribution, expressed by the venom gland.

It localises to the secreted. The catalysed reaction is a 1,2-diacyl-sn-glycero-3-phosphocholine + H2O = a 1-acyl-sn-glycero-3-phosphocholine + a fatty acid + H(+). Functionally, snake venom phospholipase A2 (PLA2) that induces significant edematogenic activity. Shows mild cytotoxicity on Trypanosoma cruzi and Leishmania infantum. Also inhibits ADP- and collagen-induced platelet aggregation. Does not show myotoxic activity. This chain is Acidic phospholipase A2 braziliase-I, found in Bothrops brazili (Brazil's lancehead).